Reading from the N-terminus, the 340-residue chain is Anthranilate phosphoribosyltransferase (340 aa).

Residues G78, 81-82 (GD), T86, 88-91 (NIST), 106-114 (KHGNRSVSS), and S118 each bind 5-phospho-alpha-D-ribose 1-diphosphate. G78 contributes to the anthranilate binding site. S90 contacts Mg(2+). N109 contributes to the anthranilate binding site. R164 provides a ligand contact to anthranilate. 2 residues coordinate Mg(2+): D223 and E224.

Belongs to the anthranilate phosphoribosyltransferase family. As to quaternary structure, homodimer. Mg(2+) is required as a cofactor.

It carries out the reaction N-(5-phospho-beta-D-ribosyl)anthranilate + diphosphate = 5-phospho-alpha-D-ribose 1-diphosphate + anthranilate. It functions in the pathway amino-acid biosynthesis; L-tryptophan biosynthesis; L-tryptophan from chorismate: step 2/5. In terms of biological role, catalyzes the transfer of the phosphoribosyl group of 5-phosphorylribose-1-pyrophosphate (PRPP) to anthranilate to yield N-(5'-phosphoribosyl)-anthranilate (PRA). This chain is Anthranilate phosphoribosyltransferase, found in Bacillus pumilus (strain SAFR-032).